Consider the following 655-residue polypeptide: Peroxidase skpo-1 (655 aa).

A signal peptide spans 1–19; that stretch reads MKSLLFSILLIYLIQLVRS. Positions 22–56 constitute a ShKT domain; sequence CTDKHIHCFFWSQEGECEVNPRWMKKHCQKACGTC. 4 disulfide bridges follow: cysteine 22–cysteine 56, cysteine 29–cysteine 49, cysteine 38–cysteine 53, and cysteine 133–cysteine 150. The active-site Proton acceptor is the histidine 222. Histidine 428 lines the heme b pocket. Disulfide bonds link cysteine 520-cysteine 576 and cysteine 617-cysteine 642.

The protein belongs to the peroxidase family. XPO subfamily. Requires heme b as cofactor. In terms of tissue distribution, exclusively expressed in hypodermis.

The catalysed reaction is 2 a phenolic donor + H2O2 = 2 a phenolic radical donor + 2 H2O. Involved in hypodermal immune response against some types of bacterial infection. Probably utilizes H(2)O(2) produced by the NADPH oxidase bli-3. May play a role in cuticule biosynthesis. This is Peroxidase skpo-1 from Caenorhabditis elegans.